The sequence spans 200 residues: Glycosyl hydrolase family 19 domain-containing protein HI_1415 (200 aa).

The protein belongs to the glycosyl hydrolase 19 family.

This Haemophilus influenzae (strain ATCC 51907 / DSM 11121 / KW20 / Rd) protein is Glycosyl hydrolase family 19 domain-containing protein HI_1415.